We begin with the raw amino-acid sequence, 70 residues long: uncharacterized protein (70 aa).

This is an uncharacterized protein from Torque teno tamarin virus (isolate So-TTV2).